Here is a 544-residue protein sequence, read N- to C-terminus: Chaperonin GroEL (544 aa).

ATP is bound by residues 30–33 (TLGP), K51, 87–91 (DGTTT), G415, and D495.

Belongs to the chaperonin (HSP60) family. In terms of assembly, forms a cylinder of 14 subunits composed of two heptameric rings stacked back-to-back. Interacts with the co-chaperonin GroES.

It localises to the cytoplasm. It catalyses the reaction ATP + H2O + a folded polypeptide = ADP + phosphate + an unfolded polypeptide.. Together with its co-chaperonin GroES, plays an essential role in assisting protein folding. The GroEL-GroES system forms a nano-cage that allows encapsulation of the non-native substrate proteins and provides a physical environment optimized to promote and accelerate protein folding. The polypeptide is Chaperonin GroEL (Neisseria gonorrhoeae (strain ATCC 700825 / FA 1090)).